The chain runs to 1036 residues: uncharacterized protein (1036 aa).

The next 2 helical transmembrane spans lie at 4–24 (YLFI…NASL) and 1004–1024 (ILWV…VLFL).

This sequence belongs to the MG414/MG415 family.

The protein localises to the cell membrane. This is an uncharacterized protein from Mycoplasma genitalium (strain ATCC 33530 / DSM 19775 / NCTC 10195 / G37) (Mycoplasmoides genitalium).